Reading from the N-terminus, the 196-residue chain is MTKRTASIKRQTTETTISLSLNLDGSGQAEMCTGVRLFDHMLSQLAKHGLFDINVSANGDDIHHLVEDVALTLGKAFNEALGERKGIVRMADATVPMDDSLATVALDLSGRGYAVVDLPFSKNDLTGFPTDLVRHFLETFAIEGRLNLHARILYGSNDHHKAEALFKALARALDKATSLDPRREGIAPSTKGMLEN.

It belongs to the imidazoleglycerol-phosphate dehydratase family.

The protein localises to the cytoplasm. It catalyses the reaction D-erythro-1-(imidazol-4-yl)glycerol 3-phosphate = 3-(imidazol-4-yl)-2-oxopropyl phosphate + H2O. The protein operates within amino-acid biosynthesis; L-histidine biosynthesis; L-histidine from 5-phospho-alpha-D-ribose 1-diphosphate: step 6/9. The sequence is that of Imidazoleglycerol-phosphate dehydratase from Dehalococcoides mccartyi (strain ATCC BAA-2266 / KCTC 15142 / 195) (Dehalococcoides ethenogenes (strain 195)).